We begin with the raw amino-acid sequence, 243 residues long: Epoxyqueuosine reductase QueH (243 aa).

The segment covering 1–16 (MHRTKLEQKQPHFDAQ) has biased composition (basic and acidic residues). The tract at residues 1–30 (MHRTKLEQKQPHFDAQKRRKKECKNSNTPF) is disordered. Residues C49, C50, C128, and C131 each coordinate [4Fe-4S] cluster. Cysteines 211 and 213 form a disulfide.

Belongs to the QueH family.

It carries out the reaction epoxyqueuosine(34) in tRNA + AH2 = queuosine(34) in tRNA + A + H2O. It participates in tRNA modification; tRNA-queuosine biosynthesis. Functionally, catalyzes the conversion of epoxyqueuosine (oQ) to queuosine (Q), which is a hypermodified base found in the wobble positions of tRNA(Asp), tRNA(Asn), tRNA(His) and tRNA(Tyr). In Histophilus somni (strain 129Pt) (Haemophilus somnus), this protein is Epoxyqueuosine reductase QueH.